A 278-amino-acid chain; its full sequence is Ankyrin repeat and SOCS box protein 13 (278 aa).

ANK repeat units lie at residues 18-47 (VERT…CVNQ), 51-80 (DSIT…QVDA), 84-113 (DGST…KVNP), 116-145 (YTAS…NLEA), 149-178 (HFGT…NVNA), and 181-210 (LHET…NIYA). Positions 229-278 (AKCFEYYEKTPLSLSQLCRVSLRKATGVRGLEKVAKLNIPPRLIDYLSYN) constitute an SOCS box domain.

Belongs to the ankyrin SOCS box (ASB) family.

Its pathway is protein modification; protein ubiquitination. Its function is as follows. May be a substrate-recognition component of a SCF-like ECS (Elongin-Cullin-SOCS-box protein) E3 ubiquitin-protein ligase complex which mediates the ubiquitination and subsequent proteasomal degradation of target proteins. This is Ankyrin repeat and SOCS box protein 13 (Asb13) from Mus musculus (Mouse).